A 378-amino-acid polypeptide reads, in one-letter code: Ret finger protein-like 2 (378 aa).

The RING-type; degenerate zinc-finger motif lies at 101–143 (CPVCSDYLEKPMSLECGCAVCLKCINSLQKEPHGEDLLCCCSS). The B30.2/SPRY domain occupies 168–362 (EPKLKKILQM…DQGVLSICPL (195 aa)).

As to expression, seems to be expressed in prostate and less abundantly in adult brain, fetal liver, and fetal kidney.

This Homo sapiens (Human) protein is Ret finger protein-like 2 (RFPL2).